The following is a 304-amino-acid chain: D-alanine--D-alanine ligase (304 aa).

An ATP-grasp domain is found at 103–301; sequence KQVWLALGLP…FDDLVWRILE (199 aa). Residue 132–187 coordinates ATP; sequence VEMLGFPVIIKPAKEGSSVGVSRVFALEHLEEAVALAARYEGELLMEQLIEGDELT. Positions 254, 268, and 270 each coordinate Mg(2+).

The protein belongs to the D-alanine--D-alanine ligase family. Requires Mg(2+) as cofactor. Mn(2+) is required as a cofactor.

The protein localises to the cytoplasm. It carries out the reaction 2 D-alanine + ATP = D-alanyl-D-alanine + ADP + phosphate + H(+). Its pathway is cell wall biogenesis; peptidoglycan biosynthesis. Functionally, cell wall formation. The protein is D-alanine--D-alanine ligase of Xylella fastidiosa (strain Temecula1 / ATCC 700964).